Here is a 509-residue protein sequence, read N- to C-terminus: Lysine--tRNA ligase (509 aa).

2 residues coordinate Mg(2+): Glu-419 and Glu-426.

The protein belongs to the class-II aminoacyl-tRNA synthetase family. In terms of assembly, homodimer. Mg(2+) serves as cofactor.

Its subcellular location is the cytoplasm. It carries out the reaction tRNA(Lys) + L-lysine + ATP = L-lysyl-tRNA(Lys) + AMP + diphosphate. This is Lysine--tRNA ligase from Methylobacillus flagellatus (strain ATCC 51484 / DSM 6875 / VKM B-1610 / KT).